Here is a 160-residue protein sequence, read N- to C-terminus: Large ribosomal subunit protein uL22c (160 aa).

The protein belongs to the universal ribosomal protein uL22 family. In terms of assembly, part of the 50S ribosomal subunit.

The protein localises to the plastid. It is found in the chloroplast. This protein binds specifically to 23S rRNA. Its function is as follows. The globular domain of the protein is located near the polypeptide exit tunnel on the outside of the subunit, while an extended beta-hairpin is found that lines the wall of the exit tunnel in the center of the 70S ribosome. The protein is Large ribosomal subunit protein uL22c (rpl22) of Nasturtium officinale (Watercress).